The following is a 145-amino-acid chain: Transthyretin (145 aa).

The first 20 residues, 1 to 20 (MASHRLFLLCLAGLVFMSEA), serve as a signal peptide directing secretion. Sulfocysteine is present on Cys-28. An L-thyroxine-binding site is contributed by Lys-33. Glu-60 is subject to 4-carboxyglutamate. Phosphoserine is present on Ser-70. Residue Glu-72 participates in L-thyroxine binding. Asn-116 is a glycosylation site (N-linked (GlcNAc...) asparagine). Ser-135 lines the L-thyroxine pocket.

This sequence belongs to the transthyretin family. In terms of assembly, homotetramer. Dimer of dimers. In the homotetramer, subunits assemble around a central channel that can accommodate two ligand molecules. Interacts with RBP4. Sulfonation of the reactive cysteine Cys-28 enhances the stability of the native conformation of TTR, avoiding misassembly of the protein leading to amyloid formation.

The protein localises to the secreted. In terms of biological role, thyroid hormone-binding protein. Probably transports thyroxine from the bloodstream to the brain. The protein is Transthyretin (TTR) of Erinaceus europaeus (Western European hedgehog).